The primary structure comprises 297 residues: NADH-ubiquinone oxidoreductase chain 1 (297 aa).

9 helical membrane passes run 1–21, 34–54, 66–86, 99–119, 139–159, 170–190, 206–228, 235–257, and 277–297; these read MKSL…TLAE, PNHV…KLIL, WLFV…WLVI, LSIL…IYTG, VSYE…GATL, GTVL…AALA, LVAG…GEYA, TVLN…IWIR, and LPFL…LDLF.

This sequence belongs to the complex I subunit 1 family.

It localises to the mitochondrion inner membrane. The enzyme catalyses a ubiquinone + NADH + 5 H(+)(in) = a ubiquinol + NAD(+) + 4 H(+)(out). Its function is as follows. Core subunit of the mitochondrial membrane respiratory chain NADH dehydrogenase (Complex I) that is believed to belong to the minimal assembly required for catalysis. Complex I functions in the transfer of electrons from NADH to the respiratory chain. The immediate electron acceptor for the enzyme is believed to be ubiquinone. The polypeptide is NADH-ubiquinone oxidoreductase chain 1 (Hyaloraphidium curvatum (Lower fungus)).